A 407-amino-acid chain; its full sequence is RNA-binding motif, single-stranded-interacting protein 2 (407 aa).

Position 1 is an N-acetylmethionine (Met-1). Positions 14 to 51 (FGYNKNNKKPYVSLSQQMAPPSPSSSTPNSSSGSTAHD) are disordered. The span at 37–47 (SSSTPNSSSGS) shows a compositional bias: low complexity. 2 consecutive RRM domains span residues 56 to 129 (TNLY…MAKQ) and 135 to 220 (TNLY…FADG). Ser-106 carries the post-translational modification Phosphoserine. A phosphoserine mark is found at Ser-280 and Ser-285. The segment covering 374–392 (PSSSVSVEESGSQQSQVPV) has biased composition (low complexity). The tract at residues 374–398 (PSSSVSVEESGSQQSQVPVDAPSEH) is disordered.

It is found in the nucleus. In Bos taurus (Bovine), this protein is RNA-binding motif, single-stranded-interacting protein 2 (RBMS2).